Consider the following 111-residue polypeptide: Prostatic steroid-binding protein C1 (111 aa).

The N-terminal stretch at 1–23 (MSTIKLSLCLLIMLAVCCYEANA) is a signal peptide.

Belongs to the secretoglobin family. Lipophilin subfamily. Prostatein is composed of three different peptides called C1, C2 and C3. These form covalent C1:C3 (F) and C2:C3 (S) heterodimers whose noncovalent association forms tetrameric (C1:C3/C3:C2) prostatein molecules.

The protein resides in the secreted. Functionally, part of prostatein which is the major secretory glycoprotein of ventral prostate gland. In Rattus norvegicus (Rat), this protein is Prostatic steroid-binding protein C1 (Psbpc1).